The sequence spans 532 residues: Metal-staphylopine-binding protein CntA (532 aa).

Positions 1-20 (MRKLTKMSAMLLASGLILTG) are cleaved as a signal peptide. Cys21 carries N-palmitoyl cysteine lipidation. Cys21 is lipidated: S-diacylglycerol cysteine. Residues Arg165, Arg418, and Asn448 each coordinate staphylopine.

It belongs to the bacterial solute-binding protein 5 family. The complex is composed of two ATP-binding proteins (CntD and CntF), two transmembrane proteins (CntB and CntC) and a solute-binding protein (CntA).

The protein localises to the cell membrane. With respect to regulation, nickel/cobalt import is reduced in the presence of zinc. Its function is as follows. Part of the ABC transporter complex CntABCDF (Opp1) involved in the uptake of metal in complex with the metallophore staphylopine (StP). Involved in the import of divalent metals ions such as nickel, cobalt and zinc. Binds the metal via the metallophore StP, and transfers the StP-metal complex to the membrane-bound permease. Binds one molecule of StP/metal. Binds StP/Co(2+) and StP/Ni(2+) tighter than StP/Zn(2+). Plays a major role in nickel/cobalt import in zinc-depleted conditions. Contributes to virulence. Required for full urease activity in vitro. The protein is Metal-staphylopine-binding protein CntA of Staphylococcus aureus (strain NCTC 8325 / PS 47).